A 363-amino-acid chain; its full sequence is Pyruvate dehydrogenase E1 component subunit alpha, mitochondrial (363 aa).

Residues 1–2 constitute a mitochondrion transit peptide; that stretch reads RN. The residue at position 36 (K36) is an N6-acetyllysine; alternate. An N6-succinyllysine; alternate modification is found at K36. Residues H65, Y91, R92, A130, G138, V140, D169, G170, A171, N198, and Y200 each coordinate pyruvate. Thiamine diphosphate-binding residues include Y91 and R92. G138, V140, D169, G170, A171, and N198 together coordinate thiamine diphosphate. A Mg(2+)-binding site is contributed by D169. Residues N198 and Y200 each contribute to the Mg(2+) site. Position 205 is a phosphoserine; by PDK1 (S205). Residue K217 is modified to N6-acetyllysine; alternate. Residue K217 is modified to N6-succinyllysine; alternate. K240 is modified (N6-acetyllysine). K250 bears the N6-succinyllysine mark. Residue H265 coordinates thiamine diphosphate. The residue at position 266 (S266) is a Phosphoserine; by PDK1, PDK2, PDK3 and PDK4. S268 bears the Phosphoserine mark. S273 bears the Phosphoserine; by PDK1, PDK2, PDK3 and PDK4 mark. Y274 carries the post-translational modification Phosphotyrosine. K286 carries the post-translational modification N6-acetyllysine; alternate. Position 286 is an N6-succinyllysine; alternate (K286). 2 positions are modified to N6-acetyllysine: K294 and K309. K358 carries the N6-succinyllysine modification.

As to quaternary structure, heterotetramer of two PDHA1 and two PDHB subunits. The heterotetramer interacts with DLAT, and is part of the multimeric pyruvate dehydrogenase complex that contains multiple copies of pyruvate dehydrogenase (E1), dihydrolipoamide acetyltransferase (DLAT, E2) and lipoamide dehydrogenase (DLD, E3). These subunits are bound to an inner core composed of about 48 DLAT and 12 PDHX molecules. Requires thiamine diphosphate as cofactor. Mg(2+) serves as cofactor. In terms of processing, phosphorylation at Ser-205, Ser-266 and Ser-273 by PDK family kinases inactivates the enzyme; for this phosphorylation at a single site is sufficient. Phosphorylation at Ser-266 interferes with access to active site, and thereby inactivates the enzyme. Dephosphorylation at all three sites, i.e. at Ser-205, Ser-266 and Ser-273, is required for reactivation. Acetylation alters the phosphorylation pattern. Deacetylated by SIRT3.

The protein localises to the mitochondrion matrix. It catalyses the reaction N(6)-[(R)-lipoyl]-L-lysyl-[protein] + pyruvate + H(+) = N(6)-[(R)-S(8)-acetyldihydrolipoyl]-L-lysyl-[protein] + CO2. Its activity is regulated as follows. Pyruvate dehydrogenase activity is inhibited by phosphorylation of PDHA1; it is reactivated by dephosphorylation. Functionally, the pyruvate dehydrogenase complex catalyzes the overall conversion of pyruvate to acetyl-CoA and CO(2), and thereby links the glycolytic pathway to the tricarboxylic cycle. This Sminthopsis macroura (Stripe-faced dunnart) protein is Pyruvate dehydrogenase E1 component subunit alpha, mitochondrial (PDHA).